A 187-amino-acid chain; its full sequence is UPF0200 protein PYRAB09750 (187 aa).

Residue 7 to 14 coordinates ATP; sequence GMPGSGKG.

The protein belongs to the UPF0200 family.

The sequence is that of UPF0200 protein PYRAB09750 from Pyrococcus abyssi (strain GE5 / Orsay).